The chain runs to 451 residues: Bifunctional protein GlmU (451 aa).

The pyrophosphorylase stretch occupies residues 1-225 (MVVVAILAAG…YQEILGINDR (225 aa)). UDP-N-acetyl-alpha-D-glucosamine is bound by residues 7–10 (LAAG), Lys21, Gln72, and 77–78 (GT). Asp102 provides a ligand contact to Mg(2+). UDP-N-acetyl-alpha-D-glucosamine is bound by residues Gly139, Glu154, Asn169, and Asn223. Position 223 (Asn223) interacts with Mg(2+). Residues 226-246 (LQLATAYEILQRRVKEQWMMA) form a linker region. Residues 247–451 (GVTLIDPNSI…LGWRRKSGES (205 aa)) are N-acetyltransferase. UDP-N-acetyl-alpha-D-glucosamine is bound by residues Arg328 and Lys346. The active-site Proton acceptor is the His358. UDP-N-acetyl-alpha-D-glucosamine is bound by residues Tyr361 and Asn372. Residues Ala375, 381–382 (NY), Ser400, Ala418, and Arg435 contribute to the acetyl-CoA site.

This sequence in the N-terminal section; belongs to the N-acetylglucosamine-1-phosphate uridyltransferase family. In the C-terminal section; belongs to the transferase hexapeptide repeat family. As to quaternary structure, homotrimer. Mg(2+) serves as cofactor.

Its subcellular location is the cytoplasm. It carries out the reaction alpha-D-glucosamine 1-phosphate + acetyl-CoA = N-acetyl-alpha-D-glucosamine 1-phosphate + CoA + H(+). The enzyme catalyses N-acetyl-alpha-D-glucosamine 1-phosphate + UTP + H(+) = UDP-N-acetyl-alpha-D-glucosamine + diphosphate. The protein operates within nucleotide-sugar biosynthesis; UDP-N-acetyl-alpha-D-glucosamine biosynthesis; N-acetyl-alpha-D-glucosamine 1-phosphate from alpha-D-glucosamine 6-phosphate (route II): step 2/2. Its pathway is nucleotide-sugar biosynthesis; UDP-N-acetyl-alpha-D-glucosamine biosynthesis; UDP-N-acetyl-alpha-D-glucosamine from N-acetyl-alpha-D-glucosamine 1-phosphate: step 1/1. It participates in bacterial outer membrane biogenesis; LPS lipid A biosynthesis. Its function is as follows. Catalyzes the last two sequential reactions in the de novo biosynthetic pathway for UDP-N-acetylglucosamine (UDP-GlcNAc). The C-terminal domain catalyzes the transfer of acetyl group from acetyl coenzyme A to glucosamine-1-phosphate (GlcN-1-P) to produce N-acetylglucosamine-1-phosphate (GlcNAc-1-P), which is converted into UDP-GlcNAc by the transfer of uridine 5-monophosphate (from uridine 5-triphosphate), a reaction catalyzed by the N-terminal domain. This chain is Bifunctional protein GlmU, found in Nostoc sp. (strain PCC 7120 / SAG 25.82 / UTEX 2576).